Consider the following 1317-residue polypeptide: DNA-directed RNA polymerase subunit beta' (1317 aa).

Residues Cys60, Cys62, Cys75, and Cys78 each contribute to the Zn(2+) site. Mg(2+) is bound by residues Asp535, Asp537, and Asp539. Zn(2+)-binding residues include Cys890, Cys967, Cys974, and Cys977.

Belongs to the RNA polymerase beta' chain family. The RNAP catalytic core consists of 2 alpha, 1 beta, 1 beta' and 1 omega subunit. When a sigma factor is associated with the core the holoenzyme is formed, which can initiate transcription. Mg(2+) is required as a cofactor. It depends on Zn(2+) as a cofactor.

The enzyme catalyses RNA(n) + a ribonucleoside 5'-triphosphate = RNA(n+1) + diphosphate. Its function is as follows. DNA-dependent RNA polymerase catalyzes the transcription of DNA into RNA using the four ribonucleoside triphosphates as substrates. This Mycolicibacterium smegmatis (strain ATCC 700084 / mc(2)155) (Mycobacterium smegmatis) protein is DNA-directed RNA polymerase subunit beta'.